A 393-amino-acid chain; its full sequence is Argininosuccinate synthase (393 aa).

Residues 10–18 (AYSGGLDTS) and Ala-37 each bind ATP. Tyr-88 is a binding site for L-citrulline. Gly-118 lines the ATP pocket. Residues Thr-120, Asn-124, and Asp-125 each contribute to the L-aspartate site. An L-citrulline-binding site is contributed by Asn-124. The L-citrulline site is built by Arg-128, Ser-176, Ser-185, Glu-261, and Tyr-273.

Belongs to the argininosuccinate synthase family. Type 1 subfamily. As to quaternary structure, homotetramer.

Its subcellular location is the cytoplasm. The catalysed reaction is L-citrulline + L-aspartate + ATP = 2-(N(omega)-L-arginino)succinate + AMP + diphosphate + H(+). It participates in amino-acid biosynthesis; L-arginine biosynthesis; L-arginine from L-ornithine and carbamoyl phosphate: step 2/3. This is Argininosuccinate synthase from Carsonella ruddii (strain PV).